Reading from the N-terminus, the 67-residue chain is DNA-directed RNA polymerase subunit omega (67 aa).

This sequence belongs to the RNA polymerase subunit omega family. As to quaternary structure, the RNAP catalytic core consists of 2 alpha, 1 beta, 1 beta' and 1 omega subunit. When a sigma factor is associated with the core the holoenzyme is formed, which can initiate transcription.

It catalyses the reaction RNA(n) + a ribonucleoside 5'-triphosphate = RNA(n+1) + diphosphate. In terms of biological role, promotes RNA polymerase assembly. Latches the N- and C-terminal regions of the beta' subunit thereby facilitating its interaction with the beta and alpha subunits. In Albidiferax ferrireducens (strain ATCC BAA-621 / DSM 15236 / T118) (Rhodoferax ferrireducens), this protein is DNA-directed RNA polymerase subunit omega.